A 285-amino-acid polypeptide reads, in one-letter code: Acetylglutamate kinase (285 aa).

Substrate-binding positions include 55–56 (GG), R77, and N171.

This sequence belongs to the acetylglutamate kinase family. ArgB subfamily.

It is found in the cytoplasm. It carries out the reaction N-acetyl-L-glutamate + ATP = N-acetyl-L-glutamyl 5-phosphate + ADP. Its pathway is amino-acid biosynthesis; L-arginine biosynthesis; N(2)-acetyl-L-ornithine from L-glutamate: step 2/4. Functionally, catalyzes the ATP-dependent phosphorylation of N-acetyl-L-glutamate. This chain is Acetylglutamate kinase, found in Chlorobaculum tepidum (strain ATCC 49652 / DSM 12025 / NBRC 103806 / TLS) (Chlorobium tepidum).